The chain runs to 312 residues: Probable rRNA-processing protein EBP2 (312 aa).

Residues 1–32 form a disordered region; that stretch reads MLHHEDESSPESDSDFDASELTDKELQEAFSQ. The segment covering 8-20 has biased composition (acidic residues); sequence SSPESDSDFDASE. A coiled-coil region spans residues 140–176; that stretch reads EMAKTDQHMQKIRHKLQLKQASMEKSEKAKQLRALRK. Residues 211–312 are disordered; that stretch reads LDFLEGDQTP…VRQKMKSKRR (102 aa). Positions 282 to 312 are enriched in basic residues; that stretch reads KGPHRPGKKGGKNANKRPGKNVRQKMKSKRR.

Belongs to the EBP2 family.

The protein localises to the nucleus. Its subcellular location is the nucleolus. Its function is as follows. Required for the processing of the 27S pre-rRNA. This chain is Probable rRNA-processing protein EBP2 (ebna1bp2), found in Xenopus laevis (African clawed frog).